A 234-amino-acid chain; its full sequence is Purine nucleoside phosphorylase DeoD-type (234 aa).

A purine D-ribonucleoside is bound at residue His5. Residues Gly21, Arg25, Arg44, and 88–91 contribute to the phosphate site; that span reads RVGT. A purine D-ribonucleoside contacts are provided by residues 178-180 and 202-203; these read EME and SD. The Proton donor role is filled by Asp203.

This sequence belongs to the PNP/UDP phosphorylase family. Homohexamer; trimer of homodimers.

It catalyses the reaction a purine D-ribonucleoside + phosphate = a purine nucleobase + alpha-D-ribose 1-phosphate. The catalysed reaction is a purine 2'-deoxy-D-ribonucleoside + phosphate = a purine nucleobase + 2-deoxy-alpha-D-ribose 1-phosphate. Functionally, catalyzes the reversible phosphorolytic breakdown of the N-glycosidic bond in the beta-(deoxy)ribonucleoside molecules, with the formation of the corresponding free purine bases and pentose-1-phosphate. This chain is Purine nucleoside phosphorylase DeoD-type, found in Lactococcus lactis subsp. cremoris (strain MG1363).